The following is a 114-amino-acid chain: Fumarate reductase subunit D (114 aa).

Transmembrane regions (helical) follow at residues 24 to 44 (VSAI…PFGL), 50 to 70 (LITF…TIFP), and 92 to 112 (GGFI…FAVI).

The protein belongs to the FrdD family. As to quaternary structure, part of an enzyme complex containing four subunits: a flavoprotein (FrdA), an iron-sulfur protein (FrdB), and two hydrophobic anchor proteins (FrdC and FrdD).

The protein resides in the cell inner membrane. Anchors the catalytic components of the fumarate reductase complex to the cell membrane, binds quinones. This is Fumarate reductase subunit D from Haemophilus influenzae (strain PittGG).